A 165-amino-acid polypeptide reads, in one-letter code: Small ribosomal subunit protein uS5 (165 aa).

One can recognise an S5 DRBM domain in the interval 13 to 76 (LEEKVLVVNR…EAARKNLITI (64 aa)).

Belongs to the universal ribosomal protein uS5 family. As to quaternary structure, part of the 30S ribosomal subunit. Contacts proteins S4 and S8.

Functionally, with S4 and S12 plays an important role in translational accuracy. Located at the back of the 30S subunit body where it stabilizes the conformation of the head with respect to the body. The sequence is that of Small ribosomal subunit protein uS5 from Chlamydia caviae (strain ATCC VR-813 / DSM 19441 / 03DC25 / GPIC) (Chlamydophila caviae).